The sequence spans 160 residues: Cyclic pyranopterin monophosphate synthase (160 aa).

Substrate is bound by residues 77–79 (MCH) and 114–115 (ME). Aspartate 129 is an active-site residue.

It belongs to the MoaC family. Homohexamer; trimer of dimers.

The catalysed reaction is (8S)-3',8-cyclo-7,8-dihydroguanosine 5'-triphosphate = cyclic pyranopterin phosphate + diphosphate. It functions in the pathway cofactor biosynthesis; molybdopterin biosynthesis. In terms of biological role, catalyzes the conversion of (8S)-3',8-cyclo-7,8-dihydroguanosine 5'-triphosphate to cyclic pyranopterin monophosphate (cPMP). The protein is Cyclic pyranopterin monophosphate synthase of Listeria monocytogenes serotype 4b (strain F2365).